A 707-amino-acid chain; its full sequence is Alpha-hemolysin translocation ATP-binding protein HlyB (707 aa).

Positions 3-125 (SCHKIDYGLY…ALYQGHIILI (123 aa)) constitute a Peptidase C39 domain. H83 is an active-site residue. Positions 154-436 (FIETLVVSVF…LAQIWQDFQQ (283 aa)) constitute an ABC transmembrane type-1 domain. Transmembrane regions (helical) follow at residues 158-178 (LVVS…FQVV), 191-211 (LNVI…LSGL), 269-289 (ALTS…MWYY), 295-315 (LVIL…SPIL), and 388-408 (VMII…LSIG). Positions 468 to 703 (ITFRNIRFRY…PESLYSYLYQ (236 aa)) constitute an ABC transporter domain. Position 502–509 (502–509 (GRSGSGKS)) interacts with ATP.

This sequence belongs to the ABC transporter superfamily. Protein-1 exporter (TC 3.A.1.109) family. As to quaternary structure, homodimer.

Its subcellular location is the cell inner membrane. In terms of biological role, part of the ABC transporter complex HlyBD involved in hemolysin export. Transmembrane domains (TMD) form a pore in the inner membrane and the ATP-binding domain (NBD) is responsible for energy generation. This is Alpha-hemolysin translocation ATP-binding protein HlyB (hlyB) from Escherichia coli.